Here is a 663-residue protein sequence, read N- to C-terminus: MSARLPVLSPPRWPRLLLLSLLLLGAVPGPRRSGAFYLPGLAPVNFCDEEKKSDECKAEIELFVNRLDSVESVLPYEYTAFDFCQASEGKRPSENLGQVLFGERIEPSPYKFTFNKKETCKLVCTKTYHTEKAEDKQKLEFLKKSMLLNYQHHWIVDNMPVTWCYDVEDGQRFCNPGFPIGCYITDKGHAKDACVISSDFHERDTFYIFNHVDIKIYYHVVETGSMGARLVAAKLEPKSFKHTHIDKPDCSGPPMDISNKASGEIKIAYTYSVSFEEDDKIRWASRWDYILESMPHTHIQWFSIMNSLVIVLFLSGMVAMIMLRTLHKDIARYNQMDSTEDAQEEFGWKLVHGDIFRPPRKGMLLSVFLGSGTQILIMTFVTLFFACLGFLSPANRGALMTCAVVLWVLLGTPAGYVAARFYKSFGGEKWKTNVLLTSFLCPGIVFADFFIMNLILWGEGSSAAIPFGTLVAILALWFCISVPLTFIGAYFGFKKNAIEHPVRTNQIPRQIPEQSFYTKPLPGIIMGGILPFGCIFIQLFFILNSIWSHQMYYMFGFLFLVFIILVITCSEATILLCYFHLCAEDYHWQWRSFLTSGFTAVYFLIYAVHYFFSKLQITGTASTILYFGYTMIMVLIFFLFTGTIGFFACFWFVTKIYSVVKVD.

The N-terminal stretch at 1-28 (MSARLPVLSPPRWPRLLLLSLLLLGAVP) is a signal peptide. Residues 29–300 (GPRRSGAFYL…LESMPHTHIQ (272 aa)) lie on the Lumenal side of the membrane. Residues 301–321 (WFSIMNSLVIVLFLSGMVAMI) traverse the membrane as a helical segment. Over 322 to 374 (MLRTLHKDIARYNQMDSTEDAQEEFGWKLVHGDIFRPPRKGMLLSVFLGSGTQ) the chain is Cytoplasmic. Residues 375–395 (ILIMTFVTLFFACLGFLSPAN) form a helical membrane-spanning segment. Residues 396–398 (RGA) lie on the Lumenal side of the membrane. The chain crosses the membrane as a helical span at residues 399 to 419 (LMTCAVVLWVLLGTPAGYVAA). Residues 420 to 437 (RFYKSFGGEKWKTNVLLT) are Cytoplasmic-facing. Residues 438–458 (SFLCPGIVFADFFIMNLILWG) form a helical membrane-spanning segment. Residues 459-466 (EGSSAAIP) are Lumenal-facing. A helical transmembrane segment spans residues 467 to 487 (FGTLVAILALWFCISVPLTFI). The Cytoplasmic segment spans residues 488–522 (GAYFGFKKNAIEHPVRTNQIPRQIPEQSFYTKPLP). The helical transmembrane segment at 523-543 (GIIMGGILPFGCIFIQLFFIL) threads the bilayer. The Lumenal portion of the chain corresponds to 544–554 (NSIWSHQMYYM). A helical membrane pass occupies residues 555 to 575 (FGFLFLVFIILVITCSEATIL). The Cytoplasmic segment spans residues 576-591 (LCYFHLCAEDYHWQWR). The chain crosses the membrane as a helical span at residues 592 to 612 (SFLTSGFTAVYFLIYAVHYFF). Topologically, residues 613–631 (SKLQITGTASTILYFGYTM) are lumenal. A helical membrane pass occupies residues 632–652 (IMVLIFFLFTGTIGFFACFWF). The Cytoplasmic segment spans residues 653-663 (VTKIYSVVKVD).

Belongs to the nonaspanin (TM9SF) (TC 9.A.2) family. As to expression, ubiquitously expressed. Especially abundant in pancreas, highly expressed in kidney, lower levels in heart, brain, skeletal muscle and placenta. Lowest expression in lung and liver.

Its subcellular location is the endosome membrane. The protein resides in the golgi outpost. The protein localises to the cytoplasm. It localises to the cytoskeleton. It is found in the microtubule organizing center. In the intracellular compartments, may function as a channel or small molecule transporter. This chain is Transmembrane 9 superfamily member 2 (TM9SF2), found in Homo sapiens (Human).